A 36-amino-acid chain; its full sequence is Photosystem I reaction center subunit VIII (36 aa).

Residues 8–28 form a helical membrane-spanning segment; that stretch reads SIFVPLVGLVFPAIAMASLFL.

It belongs to the PsaI family.

Its subcellular location is the plastid. It localises to the chloroplast thylakoid membrane. In terms of biological role, may help in the organization of the PsaL subunit. This is Photosystem I reaction center subunit VIII from Solanum bulbocastanum (Wild potato).